We begin with the raw amino-acid sequence, 497 residues long: tRNA (adenine(58)-N(1))-methyltransferase non-catalytic subunit TRM6 (497 aa).

2 disordered regions span residues methionine 1–isoleucine 20 and threonine 69–aspartate 100. The segment covering lysine 79 to aspartate 100 has biased composition (basic and acidic residues). Asparagine 94–glutamine 104 is a binding site for substrate. A Phosphothreonine modification is found at threonine 107. Substrate contacts are provided by residues lysine 145–tyrosine 154 and arginine 175–histidine 182. Residues serine 276 to arginine 354 are disordered. Phosphoserine occurs at positions 298 and 305. The span at aspartate 327 to arginine 354 shows a compositional bias: basic and acidic residues. Substrate-binding positions include arginine 349, arginine 377, arginine 415–leucine 423, and glutamine 434–histidine 441. The segment at serine 472–serine 497 is disordered. A compositionally biased stretch (basic and acidic residues) spans glutamate 478 to serine 497.

Belongs to the TRM6/GCD10 family. As to quaternary structure, heterotetramer; composed of two copies of TRMT6 and two copies of TRMT61A. As to expression, expressed in brain, liver, testis and ovary.

It is found in the nucleus. Its function is as follows. Substrate-binding subunit of tRNA (adenine-N(1)-)-methyltransferase, which catalyzes the formation of N(1)-methyladenine at position 58 (m1A58) in initiator methionyl-tRNA. Together with the TRMT61A catalytic subunit, part of a mRNA N(1)-methyltransferase complex that mediates methylation of adenosine residues at the N(1) position of a small subset of mRNAs: N(1) methylation takes place in tRNA T-loop-like structures of mRNAs and is only present at low stoichiometries. This is tRNA (adenine(58)-N(1))-methyltransferase non-catalytic subunit TRM6 (TRMT6) from Homo sapiens (Human).